Here is a 123-residue protein sequence, read N- to C-terminus: MEPCELQNELVSAEGRNRKAVLCQRCGSRVLQPGTALFSRRQLFLPSMRKKPDLVDGSNPDGDVLEEHWLVNDMFIFENVGFTKDVGNVKFLVCADCEIGPIGWHCLDDKNSFYVALERVSHE.

Position 1 is an N-acetylmethionine (M1). The MSS4 domain occupies 9–123 (ELVSAEGRNR…YVALERVSHE (115 aa)). C23, C26, C94, and C97 together coordinate Zn(2+).

It belongs to the DSS4/MSS4 family. Interacts with RAB8A. As to expression, ubiquitous.

Its function is as follows. Guanine-nucleotide-releasing protein that acts on members of the SEC4/YPT1/RAB subfamily. Stimulates GDP release from both YPT1, RAB3A and RAB10, but is less active on these proteins than on the SEC4 protein. Might play a general role in vesicular transport. In Rattus norvegicus (Rat), this protein is Guanine nucleotide exchange factor MSS4 (Rabif).